Here is a 475-residue protein sequence, read N- to C-terminus: Ribulose bisphosphate carboxylase large chain (475 aa).

A propeptide spanning residues 1-2 is cleaved from the precursor; that stretch reads MS. Proline 3 bears the N-acetylproline mark. Residue lysine 14 is modified to N6,N6,N6-trimethyllysine. Asparagine 123 and threonine 173 together coordinate substrate. Residue lysine 175 is the Proton acceptor of the active site. Lysine 177 is a binding site for substrate. The Mg(2+) site is built by lysine 201, aspartate 203, and glutamate 204. At lysine 201 the chain carries N6-carboxylysine. The Proton acceptor role is filled by histidine 294. Substrate is bound by residues arginine 295, histidine 327, and serine 379.

It belongs to the RuBisCO large chain family. Type I subfamily. In terms of assembly, heterohexadecamer of 8 large chains and 8 small chains; disulfide-linked. The disulfide link is formed within the large subunit homodimers. It depends on Mg(2+) as a cofactor. In terms of processing, the disulfide bond which can form in the large chain dimeric partners within the hexadecamer appears to be associated with oxidative stress and protein turnover.

Its subcellular location is the plastid. The protein resides in the chloroplast. It carries out the reaction 2 (2R)-3-phosphoglycerate + 2 H(+) = D-ribulose 1,5-bisphosphate + CO2 + H2O. The enzyme catalyses D-ribulose 1,5-bisphosphate + O2 = 2-phosphoglycolate + (2R)-3-phosphoglycerate + 2 H(+). Functionally, ruBisCO catalyzes two reactions: the carboxylation of D-ribulose 1,5-bisphosphate, the primary event in carbon dioxide fixation, as well as the oxidative fragmentation of the pentose substrate in the photorespiration process. Both reactions occur simultaneously and in competition at the same active site. The polypeptide is Ribulose bisphosphate carboxylase large chain (Magnolia macrophylla (Bigleaf magnolia)).